A 214-amino-acid chain; its full sequence is MSAIEMKLDAELRTETGRGASRRLRRAKRVPAIMYGGHQEPQAITLNLLQLDRLMQEEAFYSQILTVNLDGKSEQVIVKDLQRHPFKPLVEHVDLQRVVAGEKVHTSVPVHFVNEDKAPGIKAGGIIHHDLNEIEIACLPKDLPEYLEVDVSALELGSAIHLSDVPLPAGVEIPELVQGADHDHPVVSIHASRKAKADEDEAAEGEEGEEGAED.

Residues 189–214 are disordered; it reads IHASRKAKADEDEAAEGEEGEEGAED. The span at 198–214 shows a compositional bias: acidic residues; the sequence is DEDEAAEGEEGEEGAED.

The protein belongs to the bacterial ribosomal protein bL25 family. CTC subfamily. In terms of assembly, part of the 50S ribosomal subunit; part of the 5S rRNA/L5/L18/L25 subcomplex. Contacts the 5S rRNA. Binds to the 5S rRNA independently of L5 and L18.

Its function is as follows. This is one of the proteins that binds to the 5S RNA in the ribosome where it forms part of the central protuberance. This chain is Large ribosomal subunit protein bL25, found in Alkalilimnicola ehrlichii (strain ATCC BAA-1101 / DSM 17681 / MLHE-1).